A 341-amino-acid polypeptide reads, in one-letter code: HTH-type transcriptional repressor PurR (341 aa).

In terms of domain architecture, HTH lacI-type spans 2–56; it reads ATIKDVAKRANVSTTTVSHVINKTRFVAEETRNAVWAAIKELHYSPSAVARSLKV. The segment at residues 4–23 is a DNA-binding region (H-T-H motif); sequence IKDVAKRANVSTTTVSHVIN. The DNA-binding element occupies 48 to 56; the sequence is SAVARSLKV. Hypoxanthine contacts are provided by Y73, R190, T192, F221, and D275.

As to quaternary structure, homodimer.

The protein operates within purine metabolism; purine nucleotide biosynthesis [regulation]. Its function is as follows. Is the main repressor of the genes involved in the de novo synthesis of purine nucleotides, regulating purB, purC, purEK, purF, purHD, purL, purMN and guaBA expression. In addition, it participates in the regulation or coregulation of genes involved in de novo pyrimidine nucleotide biosynthesis, salvage and uptake (pyrC, pyrD, carAB and codBA), and of several genes encoding enzymes necessary for nucleotide and polyamine biosynthesis (prsA, glyA, gcvTHP, speA, glnB). Binds to a 16-bp palindromic sequence located within the promoter region of pur regulon genes. The consensus binding sequence is 5'-ACGCAAACGTTTTCNT-3'. PurR is allosterically activated to bind its cognate DNA by binding the purine corepressors, hypoxanthine or guanine, thereby effecting transcription repression. This Escherichia coli (strain K12) protein is HTH-type transcriptional repressor PurR (purR).